The chain runs to 766 residues: MVSNQRVRLFMLCFCLVNNAVIAATEDENVERKPYIVYMGEATENSLVEAAENHHNLLMTVIGDESKARELKIYSYGKNINGFVARLFPHEAEKLSREEGVVSVFKNTQRQLHTTRSWDFLGLVESKYKRSVGIESNIIVGVLDTGIDVESPSFNDKGVGPPPAKWKGKCVTGNNFTRCNNKVIGAKYFHIQSEGLPDGEGDTAADHDGHGTHTSSTIAGVSVSSASLFGIANGTARGGVPSARIAAYKVCWDSGCTDMDMLAAFDEAISDGVDIISISIGGASLPFFEDPIAIGAFHAMKRGILTTCSAGNNGPGLFTVSNLAPWVMTVAANSLDRKFETVVKLGNGLTASGISLNGFNPRKKMYPLTSGSLASNLSAGGYGEPSTCEPGTLGEDKVMGKVVYCEAGREEGGNGGQGQDHVVRSLKGAGVIVQLLEPTDMATSTLIAGSYVFFEDGTKITEYINSTKNPQAVIFKTKTTKMLAPSISSFSARGPQRISPNILKPDISAPGLNILAAYSKLASVTGYPDDNRRTLFSIMSGTSMACPHAAAAAAYVKSFHPDWSPAAIKSALMTTATPMRIKGNEAELSYGSGQINPRRAIHPGLVYDITEDAYLRFLCKEGYNSTSIGLLTGDNSNNTTKKEYNCENIKRGLGSDGLNYPSLHKQVNSTEAKVSEVFYRTVTNVGYGPSTYVARVWAPKGLRVEVVPKVMSFERPKEKRNFKVVIDGVWDETMKGIVSASVEWDDSRGHLVRSPILLFRSDNDYR.

The first 23 residues, 1–23, serve as a signal peptide directing secretion; that stretch reads MVSNQRVRLFMLCFCLVNNAVIA. Positions 24-113 are cleaved as a propeptide — activation peptide; sequence ATEDENVERK…VFKNTQRQLH (90 aa). The region spanning 35–113 is the Inhibitor I9 domain; sequence YIVYMGEATE…VFKNTQRQLH (79 aa). The Peptidase S8 domain maps to 117–601; the sequence is SWDFLGLVES…SGQINPRRAI (485 aa). The Charge relay system role is filled by aspartate 144. Asparagine 175 carries an N-linked (GlcNAc...) asparagine glycan. The active-site Charge relay system is histidine 210. Residues asparagine 233, asparagine 376, and asparagine 465 are each glycosylated (N-linked (GlcNAc...) asparagine). A PA domain is found at 365–460; the sequence is MYPLTSGSLA…YVFFEDGTKI (96 aa). The Charge relay system role is filled by serine 543. Asparagine 624, asparagine 638, and asparagine 668 each carry an N-linked (GlcNAc...) asparagine glycan.

This sequence belongs to the peptidase S8 family. Post-translationally, the C-terminal propeptide is autocleaved.

The protein resides in the secreted. The protein is Subtilisin-like protease SBT4.15 of Arabidopsis thaliana (Mouse-ear cress).